A 724-amino-acid chain; its full sequence is Catalase-peroxidase (724 aa).

Residues 98 to 226 (WHSAGSYRIA…LAAVMMGLIY (129 aa)) constitute a cross-link (tryptophyl-tyrosyl-methioninium (Trp-Tyr) (with M-252)). The active-site Proton acceptor is H99. A cross-link (tryptophyl-tyrosyl-methioninium (Tyr-Met) (with W-98)) is located at residues 226-252 (YVNPEGVDGHPDPQKTANDVRVTFARM). H267 contributes to the heme b binding site.

This sequence belongs to the peroxidase family. Peroxidase/catalase subfamily. In terms of assembly, homodimer or homotetramer. Heme b is required as a cofactor. Formation of the three residue Trp-Tyr-Met cross-link is important for the catalase, but not the peroxidase activity of the enzyme.

The catalysed reaction is H2O2 + AH2 = A + 2 H2O. It catalyses the reaction 2 H2O2 = O2 + 2 H2O. Functionally, bifunctional enzyme with both catalase and broad-spectrum peroxidase activity. The protein is Catalase-peroxidase of Edwardsiella tarda.